The following is a 536-amino-acid chain: CTP synthase (536 aa).

Residues 1–267 are amidoligase domain; it reads MSKFVFVTGG…CKETLKYLEL (267 aa). Ser-13 is a CTP binding site. Residue Ser-13 coordinates UTP. ATP contacts are provided by residues 14-19 and Asp-71; that span reads SIGKGI. Residues Asp-71 and Glu-141 each contribute to the Mg(2+) site. CTP-binding positions include 148 to 150, 188 to 193, and Lys-224; these read DIE and KTKPTQ. UTP contacts are provided by residues 188–193 and Lys-224; that span reads KTKPTQ. The Glutamine amidotransferase type-1 domain maps to 292–534; it reads KVALVGKYIE…IKASQEKLTQ (243 aa). Gly-354 lines the L-glutamine pocket. The active-site Nucleophile; for glutamine hydrolysis is the Cys-381. Residues 382–385, Glu-405, and Arg-462 each bind L-glutamine; that span reads LGMQ. Catalysis depends on residues His-507 and Glu-509.

Belongs to the CTP synthase family. In terms of assembly, homotetramer.

The catalysed reaction is UTP + L-glutamine + ATP + H2O = CTP + L-glutamate + ADP + phosphate + 2 H(+). It catalyses the reaction L-glutamine + H2O = L-glutamate + NH4(+). It carries out the reaction UTP + NH4(+) + ATP = CTP + ADP + phosphate + 2 H(+). It participates in pyrimidine metabolism; CTP biosynthesis via de novo pathway; CTP from UDP: step 2/2. Its activity is regulated as follows. Allosterically activated by GTP, when glutamine is the substrate; GTP has no effect on the reaction when ammonia is the substrate. The allosteric effector GTP functions by stabilizing the protein conformation that binds the tetrahedral intermediate(s) formed during glutamine hydrolysis. Inhibited by the product CTP, via allosteric rather than competitive inhibition. Functionally, catalyzes the ATP-dependent amination of UTP to CTP with either L-glutamine or ammonia as the source of nitrogen. Regulates intracellular CTP levels through interactions with the four ribonucleotide triphosphates. The polypeptide is CTP synthase (Prochlorococcus marinus (strain MIT 9215)).